The primary structure comprises 567 residues: Geraniol synthase, chloroplastic (567 aa).

The transit peptide at 1–63 (MSCARITVTL…GDNSQRKNTR (63 aa)) directs the protein to the chloroplast. Residues 48–75 (STPLINGDNSQRKNTRQHMEESSSKRRE) form a disordered region. Residues 64-75 (QHMEESSSKRRE) show a composition bias toward basic and acidic residues. (2E)-geranyl diphosphate is bound by residues Arg-286, Asp-323, Asp-327, Arg-466, and Asp-469. Residues Asp-323 and Asp-327 each contribute to the Mn(2+) site. A DDXXD motif motif is present at residues 323 to 327 (DDIFD). Residues Asp-469, Thr-473, and Glu-477 each coordinate Mn(2+).

It belongs to the terpene synthase family. Tpsb subfamily. As to quaternary structure, homodimer. Mn(2+) is required as a cofactor. Expressed in the peltate glandular trichomes of the leaves.

The protein localises to the plastid. It localises to the chloroplast. The enzyme catalyses (2E)-geranyl diphosphate + H2O = (2E)-geraniol + diphosphate. The protein operates within secondary metabolite biosynthesis; terpenoid biosynthesis. Functionally, monoterpene synthase that catalyzes the formation of geraniol from geranyl diphosphate. The chain is Geraniol synthase, chloroplastic (GES) from Ocimum basilicum (Sweet basil).